We begin with the raw amino-acid sequence, 115 residues long: MYAIIKTGGKQYRVTEGQMLKVEKLAQDVGQSVKFDDVLMVAAGDELHIGTPSVKDAAVTAEVVDQGRQAKIEIIKFKRRKHHMKRQGHRQDFTAVKITEIALGKAKKEVKTDGA.

This sequence belongs to the bacterial ribosomal protein bL21 family. In terms of assembly, part of the 50S ribosomal subunit. Contacts protein L20.

This protein binds to 23S rRNA in the presence of protein L20. The chain is Large ribosomal subunit protein bL21 from Coxiella burnetii (strain RSA 331 / Henzerling II).